The chain runs to 255 residues: Ribosomal RNA large subunit methyltransferase E (255 aa).

5 residues coordinate S-adenosyl-L-methionine: glycine 50, tryptophan 52, aspartate 68, aspartate 84, and aspartate 108. The active-site Proton acceptor is the lysine 148. The region spanning 195 to 253 is the TRAM domain; the sequence is PVRSGEIYDVTVDSVGRTGDGIAMIQGFAVIVKNASPGERLRIKIGPVKQRFAFASILE.

It belongs to the class I-like SAM-binding methyltransferase superfamily. RNA methyltransferase RlmE family.

It localises to the cytoplasm. The enzyme catalyses uridine(2552) in 23S rRNA + S-adenosyl-L-methionine = 2'-O-methyluridine(2552) in 23S rRNA + S-adenosyl-L-homocysteine + H(+). Specifically methylates the uridine in position 2552 of 23S rRNA at the 2'-O position of the ribose in the fully assembled 50S ribosomal subunit. The chain is Ribosomal RNA large subunit methyltransferase E from Methanothrix thermoacetophila (strain DSM 6194 / JCM 14653 / NBRC 101360 / PT) (Methanosaeta thermophila).